The sequence spans 62 residues: UPF0434 protein RHECIAT_CH0004260 (62 aa).

This sequence belongs to the UPF0434 family.

The polypeptide is UPF0434 protein RHECIAT_CH0004260 (Rhizobium etli (strain CIAT 652)).